Here is a 115-residue protein sequence, read N- to C-terminus: Holo-[acyl-carrier-protein] synthase (115 aa).

Mg(2+) contacts are provided by D5 and E50.

This sequence belongs to the P-Pant transferase superfamily. AcpS family. It depends on Mg(2+) as a cofactor.

It is found in the cytoplasm. The enzyme catalyses apo-[ACP] + CoA = holo-[ACP] + adenosine 3',5'-bisphosphate + H(+). Its function is as follows. Transfers the 4'-phosphopantetheine moiety from coenzyme A to a Ser of acyl-carrier-protein. The sequence is that of Holo-[acyl-carrier-protein] synthase from Campylobacter fetus subsp. fetus (strain 82-40).